Reading from the N-terminus, the 841-residue chain is Follistatin-related protein 4 (841 aa).

Positions 1 to 22 (MKPGGFWPHLALLGVSLPAVLG) are cleaved as a signal peptide. The interval 29–54 (SRSPNMVPGESQAEETRGFEVTRREG) is disordered. Residues 42-54 (EETRGFEVTRREG) are compositionally biased toward basic and acidic residues. In terms of domain architecture, Kazal-like spans 80–134 (TTGQPSCQCLEVCRPRYMPVCGSDGRLYGNHCELRRAACLLGKRIVSVHSKDCFL). Intrachain disulfides connect C86/C118, C92/C111, and C100/C132. EF-hand domains are found at residues 173 to 208 (QKRL…EQDM) and 225 to 247 (DYNS…IQLS). 10 residues coordinate Ca(2+): D186, D188, N190, H192, E197, D225, N227, D229, S231, and E236. 2 Ig-like domains span residues 250–336 (PEDK…VLQV) and 340–425 (PVIR…EDIS). Intrachain disulfides connect C269-C320 and C361-C412. N317 carries N-linked (GlcNAc...) asparagine glycosylation.

It localises to the secreted. This Mus musculus (Mouse) protein is Follistatin-related protein 4 (Fstl4).